The primary structure comprises 184 residues: ATP synthase subunit delta (184 aa).

The protein belongs to the ATPase delta chain family. F-type ATPases have 2 components, F(1) - the catalytic core - and F(0) - the membrane proton channel. F(1) has five subunits: alpha(3), beta(3), gamma(1), delta(1), epsilon(1). F(0) has three main subunits: a(1), b(2) and c(10-14). The alpha and beta chains form an alternating ring which encloses part of the gamma chain. F(1) is attached to F(0) by a central stalk formed by the gamma and epsilon chains, while a peripheral stalk is formed by the delta and b chains.

The protein resides in the cell inner membrane. Functionally, f(1)F(0) ATP synthase produces ATP from ADP in the presence of a proton or sodium gradient. F-type ATPases consist of two structural domains, F(1) containing the extramembraneous catalytic core and F(0) containing the membrane proton channel, linked together by a central stalk and a peripheral stalk. During catalysis, ATP synthesis in the catalytic domain of F(1) is coupled via a rotary mechanism of the central stalk subunits to proton translocation. This protein is part of the stalk that links CF(0) to CF(1). It either transmits conformational changes from CF(0) to CF(1) or is implicated in proton conduction. This chain is ATP synthase subunit delta, found in Rickettsia massiliae (strain Mtu5).